We begin with the raw amino-acid sequence, 64 residues long: Orcokinin peptides (64 aa).

2 consecutive propeptides follow at residues 1 to 6 (MNIRPG) and 23 to 24 (NI).

Belongs to the orcokinin family. In terms of tissue distribution, orcokinin-3 is expressed throughout the central nervous system (at protein level).

Its subcellular location is the secreted. Functionally, myotropic peptides. The chain is Orcokinin peptides from Camponotus floridanus (Florida carpenter ant).